We begin with the raw amino-acid sequence, 31 residues long: Cytochrome b6-f complex subunit 6 (31 aa).

The helical transmembrane segment at 3–23 (ALIGYILLMTLMFSLAAGLYF) threads the bilayer.

Belongs to the PetL family. The 4 large subunits of the cytochrome b6-f complex are cytochrome b6, subunit IV (17 kDa polypeptide, PetD), cytochrome f and the Rieske protein, while the 4 small subunits are PetG, PetL, PetM and PetN. The complex functions as a dimer.

It is found in the plastid. The protein localises to the chloroplast thylakoid membrane. Its function is as follows. Component of the cytochrome b6-f complex, which mediates electron transfer between photosystem II (PSII) and photosystem I (PSI), cyclic electron flow around PSI, and state transitions. PetL is important for photoautotrophic growth as well as for electron transfer efficiency and stability of the cytochrome b6-f complex. The chain is Cytochrome b6-f complex subunit 6 from Emiliania huxleyi (Coccolithophore).